We begin with the raw amino-acid sequence, 138 residues long: Large ribosomal subunit protein uL16 (138 aa).

A compositionally biased stretch (basic residues) spans 1–17 (MLIPRKVKHRKQHHPKQ). A disordered region spans residues 1–24 (MLIPRKVKHRKQHHPKQRGIASGG).

Belongs to the universal ribosomal protein uL16 family. In terms of assembly, part of the 50S ribosomal subunit.

Binds 23S rRNA and is also seen to make contacts with the A and possibly P site tRNAs. This chain is Large ribosomal subunit protein uL16, found in Mycolicibacterium vanbaalenii (strain DSM 7251 / JCM 13017 / BCRC 16820 / KCTC 9966 / NRRL B-24157 / PYR-1) (Mycobacterium vanbaalenii).